The primary structure comprises 133 residues: ATP synthase epsilon chain (133 aa).

It belongs to the ATPase epsilon chain family. As to quaternary structure, F-type ATPases have 2 components, CF(1) - the catalytic core - and CF(0) - the membrane proton channel. CF(1) has five subunits: alpha(3), beta(3), gamma(1), delta(1), epsilon(1). CF(0) has three main subunits: a, b and c.

The protein localises to the cell membrane. In terms of biological role, produces ATP from ADP in the presence of a proton gradient across the membrane. This chain is ATP synthase epsilon chain (atpC), found in Mycoplasma pneumoniae (strain ATCC 29342 / M129 / Subtype 1) (Mycoplasmoides pneumoniae).